Here is a 313-residue protein sequence, read N- to C-terminus: NADH-ubiquinone oxidoreductase chain 2 (313 aa).

10 consecutive transmembrane segments (helical) span residues 3 to 23, 47 to 67, 81 to 101, 105 to 125, 128 to 148, 153 to 173, 177 to 197, 220 to 240, 253 to 275, and 293 to 313; these read IWII…FIFW, SMIT…ISSF, INIS…LIMI, LTFY…LLII, FMNS…SIMA, LIKQ…LCLI, MNFW…IIIN, NTMI…GFFM, LIFM…RILT, and KSNF…NIFF.

Belongs to the complex I subunit 2 family.

The protein localises to the mitochondrion inner membrane. The catalysed reaction is a ubiquinone + NADH + 5 H(+)(in) = a ubiquinol + NAD(+) + 4 H(+)(out). In terms of biological role, core subunit of the mitochondrial membrane respiratory chain NADH dehydrogenase (Complex I) that is believed to belong to the minimal assembly required for catalysis. Complex I functions in the transfer of electrons from NADH to the respiratory chain. The immediate electron acceptor for the enzyme is believed to be ubiquinone. This is NADH-ubiquinone oxidoreductase chain 2 (ND2) from Rhipicephalus sanguineus (Brown dog tick).